Reading from the N-terminus, the 409-residue chain is Histidine--tRNA ligase (409 aa).

Belongs to the class-II aminoacyl-tRNA synthetase family.

The protein resides in the cytoplasm. The enzyme catalyses tRNA(His) + L-histidine + ATP = L-histidyl-tRNA(His) + AMP + diphosphate + H(+). The sequence is that of Histidine--tRNA ligase (hisS) from Archaeoglobus fulgidus (strain ATCC 49558 / DSM 4304 / JCM 9628 / NBRC 100126 / VC-16).